The primary structure comprises 297 residues: ATP synthase subunit gamma, mitochondrial (297 aa).

It belongs to the ATPase gamma chain family. In terms of assembly, F-type ATPases have 2 components, CF(1) - the catalytic core - and CF(0) - the membrane proton channel. CF(1) has five subunits: alpha(3), beta(3), gamma(1), delta(1), epsilon(1). CF(0) has three main subunits: a, b and c.

It is found in the mitochondrion. The protein resides in the mitochondrion inner membrane. In terms of biological role, mitochondrial membrane ATP synthase (F(1)F(0) ATP synthase or Complex V) produces ATP from ADP in the presence of a proton gradient across the membrane which is generated by electron transport complexes of the respiratory chain. F-type ATPases consist of two structural domains, F(1) - containing the extramembraneous catalytic core, and F(0) - containing the membrane proton channel, linked together by a central stalk and a peripheral stalk. During catalysis, ATP synthesis in the catalytic domain of F(1) is coupled via a rotary mechanism of the central stalk subunits to proton translocation. Part of the complex F(1) domain and the central stalk which is part of the complex rotary element. The gamma subunit protrudes into the catalytic domain formed of alpha(3)beta(3). Rotation of the central stalk against the surrounding alpha(3)beta(3) subunits leads to hydrolysis of ATP in three separate catalytic sites on the beta subunits. This chain is ATP synthase subunit gamma, mitochondrial, found in Drosophila melanogaster (Fruit fly).